The sequence spans 742 residues: Phosphoribosylformylglycinamidine synthase subunit PurL (742 aa).

Residue histidine 54 is part of the active site. ATP contacts are provided by tyrosine 57 and lysine 96. Glutamate 98 lines the Mg(2+) pocket. Substrate contacts are provided by residues 99-102 (SHNH) and arginine 121. The Proton acceptor role is filled by histidine 100. Mg(2+) is bound at residue aspartate 122. Residue glutamine 245 participates in substrate binding. Aspartate 273 is a binding site for Mg(2+). Residue 317–319 (ESQ) participates in substrate binding. ATP-binding residues include aspartate 500 and glycine 537. Asparagine 538 contacts Mg(2+). Serine 540 is a binding site for substrate.

This sequence belongs to the FGAMS family. In terms of assembly, monomer. Part of the FGAM synthase complex composed of 1 PurL, 1 PurQ and 2 PurS subunits.

The protein resides in the cytoplasm. The enzyme catalyses N(2)-formyl-N(1)-(5-phospho-beta-D-ribosyl)glycinamide + L-glutamine + ATP + H2O = 2-formamido-N(1)-(5-O-phospho-beta-D-ribosyl)acetamidine + L-glutamate + ADP + phosphate + H(+). It functions in the pathway purine metabolism; IMP biosynthesis via de novo pathway; 5-amino-1-(5-phospho-D-ribosyl)imidazole from N(2)-formyl-N(1)-(5-phospho-D-ribosyl)glycinamide: step 1/2. Part of the phosphoribosylformylglycinamidine synthase complex involved in the purines biosynthetic pathway. Catalyzes the ATP-dependent conversion of formylglycinamide ribonucleotide (FGAR) and glutamine to yield formylglycinamidine ribonucleotide (FGAM) and glutamate. The FGAM synthase complex is composed of three subunits. PurQ produces an ammonia molecule by converting glutamine to glutamate. PurL transfers the ammonia molecule to FGAR to form FGAM in an ATP-dependent manner. PurS interacts with PurQ and PurL and is thought to assist in the transfer of the ammonia molecule from PurQ to PurL. The protein is Phosphoribosylformylglycinamidine synthase subunit PurL of Geobacillus kaustophilus (strain HTA426).